The sequence spans 182 residues: MKIKTLAIVVLSALSLSSTAALAAATTVNGGTVHFKGEVVNAACAVDAGSVDQTVQLGQVRTASLAQEGATSSAVGFNIQLNDCDTNVASKAAVAFLGTAIDAGHTNVLALQSSAAGSATNVGVQILDRTGAALTLDGATFSSETTLNNGTNTIPFQARYFATGAATPGAANADATFKVQYQ.

The signal sequence occupies residues 1–23 (MKIKTLAIVVLSALSLSSTAALA). C44 and C84 are joined by a disulfide.

This sequence belongs to the fimbrial protein family.

It localises to the fimbrium. Functionally, fimbriae (also called pili), polar filaments radiating from the surface of the bacterium to a length of 0.5-1.5 micrometers and numbering 100-300 per cell, enable bacteria to colonize the epithelium of specific host organs. This Escherichia coli (strain K12) protein is Type-1 fimbrial protein, A chain (fimA).